A 620-amino-acid polypeptide reads, in one-letter code: Chaperone protein DnaK (620 aa).

Position 197 is a phosphothreonine; by autocatalysis (Thr197). Positions 597–620 (AMANKNNAEQPKKKDDDVIDAEVE) are disordered.

This sequence belongs to the heat shock protein 70 family.

Its function is as follows. Acts as a chaperone. The polypeptide is Chaperone protein DnaK (Helicobacter pylori (strain G27)).